Here is a 991-residue protein sequence, read N- to C-terminus: uncharacterized protein (991 aa).

A signal peptide spans 1 to 17 (MLWPAALVAMFALAARA). 6 disordered regions span residues 332–352 (DPLP…GETT), 392–425 (TTED…TTEG), 469–511 (EDST…EDTT), 542–569 (DTEA…TTPV), 587–641 (PAPT…NSLS), and 658–734 (ASSG…PPRI). The segment covering 400–413 (TSTPTVTTVIDPTS) has biased composition (low complexity). Polar residues predominate over residues 414-425 (GAVTTESRTTEG). The span at 472–493 (TTTARAAEYPTPTTTTVEPRPA) shows a compositional bias: low complexity. Residues 542–554 (DTEAAQSATSISD) are compositionally biased toward polar residues. Low complexity-rich tracts occupy residues 556–569 (VTPE…TTPV) and 598–615 (ASTT…SHTP). Polar residues-rich tracts occupy residues 617 to 628 (PQESTSTPSRAP) and 658 to 667 (ASSGPGASTG). Low complexity predominate over residues 668–682 (ATTAPISPPWSASPA). Polar residues predominate over residues 686 to 710 (VTTSAARTLEPSSTRKAVAAESTTA).

This is an uncharacterized protein from Psittacid herpesvirus 1 (isolate Amazon parrot/-/97-0001/1997) (PsHV-1).